The sequence spans 626 residues: Hemocyanin AA6 chain (626 aa).

His-170, His-174, His-201, His-321, His-325, and His-361 together coordinate Cu cation. Position 374 is a phosphoserine (Ser-374).

Belongs to the tyrosinase family. Hemocyanin subfamily. As to quaternary structure, scorpion hemocyanin is a 24-chain polymer with 8 different chains identified, assembled in hexameric substructures. Three disulfide bonds are present. Hemolymph.

It is found in the secreted. Its subcellular location is the extracellular space. Hemocyanins are copper-containing oxygen carriers occurring freely dissolved in the hemolymph of many mollusks and arthropods. This Androctonus australis (Sahara scorpion) protein is Hemocyanin AA6 chain.